Here is a 106-residue protein sequence, read N- to C-terminus: Small ribosomal subunit protein uS10 (106 aa).

This sequence belongs to the universal ribosomal protein uS10 family. Part of the 30S ribosomal subunit.

In terms of biological role, involved in the binding of tRNA to the ribosomes. The polypeptide is Small ribosomal subunit protein uS10 (Mycoplasma genitalium (strain ATCC 33530 / DSM 19775 / NCTC 10195 / G37) (Mycoplasmoides genitalium)).